A 510-amino-acid chain; its full sequence is GTPase Der (510 aa).

EngA-type G domains follow at residues 3 to 166 (PVVA…ATAL) and 220 to 393 (IKIA…ACAT). GTP contacts are provided by residues 9-16 (GRPNVGKS), 56-60 (DTGGI), 118-121 (NKTD), 226-233 (GRPNVGKS), 273-277 (DTAGV), and 338-341 (NKWD). The 85-residue stretch at 394–478 (QKTSTSMLTR…PIRIQFQEGN (85 aa)) folds into the KH-like domain.

It belongs to the TRAFAC class TrmE-Era-EngA-EngB-Septin-like GTPase superfamily. EngA (Der) GTPase family. As to quaternary structure, associates with the 50S ribosomal subunit.

In terms of biological role, GTPase that plays an essential role in the late steps of ribosome biogenesis. The chain is GTPase Der from Haemophilus ducreyi (strain 35000HP / ATCC 700724).